The primary structure comprises 523 residues: Bifunctional purine biosynthesis protein PurH (523 aa).

The region spanning Met1 to Thr152 is the MGS-like domain.

The protein belongs to the PurH family.

The enzyme catalyses (6R)-10-formyltetrahydrofolate + 5-amino-1-(5-phospho-beta-D-ribosyl)imidazole-4-carboxamide = 5-formamido-1-(5-phospho-D-ribosyl)imidazole-4-carboxamide + (6S)-5,6,7,8-tetrahydrofolate. It catalyses the reaction IMP + H2O = 5-formamido-1-(5-phospho-D-ribosyl)imidazole-4-carboxamide. It functions in the pathway purine metabolism; IMP biosynthesis via de novo pathway; 5-formamido-1-(5-phospho-D-ribosyl)imidazole-4-carboxamide from 5-amino-1-(5-phospho-D-ribosyl)imidazole-4-carboxamide (10-formyl THF route): step 1/1. The protein operates within purine metabolism; IMP biosynthesis via de novo pathway; IMP from 5-formamido-1-(5-phospho-D-ribosyl)imidazole-4-carboxamide: step 1/1. This Mycobacterium bovis (strain BCG / Pasteur 1173P2) protein is Bifunctional purine biosynthesis protein PurH.